A 255-amino-acid polypeptide reads, in one-letter code: tRNA (guanine-N(1)-)-methyltransferase (255 aa).

S-adenosyl-L-methionine contacts are provided by residues Gly-113 and 133–138 (IGDYVL).

This sequence belongs to the RNA methyltransferase TrmD family. Homodimer.

The protein localises to the cytoplasm. It catalyses the reaction guanosine(37) in tRNA + S-adenosyl-L-methionine = N(1)-methylguanosine(37) in tRNA + S-adenosyl-L-homocysteine + H(+). Its function is as follows. Specifically methylates guanosine-37 in various tRNAs. The chain is tRNA (guanine-N(1)-)-methyltransferase from Serratia proteamaculans (strain 568).